We begin with the raw amino-acid sequence, 354 residues long: Biotin synthase (354 aa).

A Radical SAM core domain is found at 64–282 (GDVELATLLS…IAVARITMPR (219 aa)). Positions 79, 83, and 86 each coordinate [4Fe-4S] cluster. Cys-123, Cys-154, Cys-214, and Arg-286 together coordinate [2Fe-2S] cluster.

The protein belongs to the radical SAM superfamily. Biotin synthase family. In terms of assembly, homodimer. It depends on [4Fe-4S] cluster as a cofactor. The cofactor is [2Fe-2S] cluster.

It carries out the reaction (4R,5S)-dethiobiotin + (sulfur carrier)-SH + 2 reduced [2Fe-2S]-[ferredoxin] + 2 S-adenosyl-L-methionine = (sulfur carrier)-H + biotin + 2 5'-deoxyadenosine + 2 L-methionine + 2 oxidized [2Fe-2S]-[ferredoxin]. Its pathway is cofactor biosynthesis; biotin biosynthesis; biotin from 7,8-diaminononanoate: step 2/2. Catalyzes the conversion of dethiobiotin (DTB) to biotin by the insertion of a sulfur atom into dethiobiotin via a radical-based mechanism. The protein is Biotin synthase of Paracidovorax citrulli (strain AAC00-1) (Acidovorax citrulli).